Here is a 98-residue protein sequence, read N- to C-terminus: NADH-ubiquinone oxidoreductase chain 4L (98 aa).

Transmembrane regions (helical) follow at residues 1–21 (MSMV…GLLM), 29–49 (SLLC…VAIL), and 61–81 (IILL…LVMV).

This sequence belongs to the complex I subunit 4L family. In terms of assembly, core subunit of respiratory chain NADH dehydrogenase (Complex I) which is composed of 45 different subunits.

It localises to the mitochondrion inner membrane. It carries out the reaction a ubiquinone + NADH + 5 H(+)(in) = a ubiquinol + NAD(+) + 4 H(+)(out). Its function is as follows. Core subunit of the mitochondrial membrane respiratory chain NADH dehydrogenase (Complex I) which catalyzes electron transfer from NADH through the respiratory chain, using ubiquinone as an electron acceptor. Part of the enzyme membrane arm which is embedded in the lipid bilayer and involved in proton translocation. The chain is NADH-ubiquinone oxidoreductase chain 4L (MT-ND4L) from Puma concolor (Mountain lion).